The sequence spans 573 residues: DEAD-box ATP-dependent RNA helicase 47B (573 aa).

The Q motif signature appears at 131-159 (KSFEELGLPPLLIDRLNKEGLSTPTEVQS). The region spanning 162 to 362 (IPIISQKHDA…RSWGHDPVLV (201 aa)) is the Helicase ATP-binding domain. Residue 175-182 (SYTGSGKT) coordinates ATP. The DEAD box motif lies at 293-296 (DEVD). In terms of domain architecture, Helicase C-terminal spans 421–565 (TLRRCIHALE…PCEFTEGKLL (145 aa)).

The protein belongs to the DEAD box helicase family.

The enzyme catalyses ATP + H2O = ADP + phosphate + H(+). This is DEAD-box ATP-dependent RNA helicase 47B from Oryza sativa subsp. japonica (Rice).